A 434-amino-acid chain; its full sequence is Citrate-proton symporter (434 aa).

Over 1–21 (MAQHTPATSRAGTFGAILRVT) the chain is Cytoplasmic. A helical transmembrane segment spans residues 22–42 (SGNFLEQFDFFLFGFYATYIA). At 43-54 (RTFFPAESEFAS) the chain is on the periplasmic side. A helical membrane pass occupies residues 55–75 (LMLTFAVFGSGFLMRPVGAIV). The Cytoplasmic portion of the chain corresponds to 76 to 87 (LGAYIDRIGRRK). The helical transmembrane segment at 88–108 (GLMVTLAIMGCGTLLIALVPG) threads the bilayer. The Periplasmic segment spans residues 109 to 111 (YQT). A helical transmembrane segment spans residues 112–132 (IGLAAPALVLLGRLLQGFSAG). Topologically, residues 133–164 (VELGGVSVYLSEIATPGNKGFYTSWQSASQQV) are cytoplasmic. A helical transmembrane segment spans residues 165–185 (AIVVAALIGYSLNITLGHDAI). Residue Ser186 is a topological domain, periplasmic. Residues 187-207 (EWGWRIPFFIGCMIIPLIFVL) form a helical membrane-spanning segment. Topologically, residues 208–238 (RRSLQETEAFLQRKHRPDTREIFATIAKNWR) are cytoplasmic. A helical transmembrane segment spans residues 239 to 259 (IITAGTLLVAMTTTTFYFITV). At 260–276 (YTPTYGRTVLNLSARDS) the chain is on the periplasmic side. Residues 277 to 297 (LIVTMLVGVSNFIWLPIGGAI) form a helical membrane-spanning segment. The Cytoplasmic segment spans residues 298–304 (SDRIGRR). The chain crosses the membrane as a helical span at residues 305–325 (AVLMGITLLALITTWPVMQWL). At 326 to 335 (TAAPDFTRMT) the chain is on the periplasmic side. The chain crosses the membrane as a helical span at residues 336-356 (LVLLWFSFFFGMYNGAMVAAL). Residues 357 to 366 (TEVMPVYVRT) lie on the Cytoplasmic side of the membrane. A helical membrane pass occupies residues 367–387 (VGFSLAFSLATAIFGGLTPAI). Residues 388–400 (STALVKLTGDKSS) lie on the Periplasmic side of the membrane. A helical membrane pass occupies residues 401–421 (PGWWLMCAALCGLAATAMLFV). Topologically, residues 422-434 (RLSRGYIAAENKA) are cytoplasmic.

This sequence belongs to the major facilitator superfamily. Metabolite:H+ Symporter (MHS) family (TC 2.A.1.6) family.

The protein resides in the cell inner membrane. Functionally, uptake of citrate across the boundary membrane with the concomitant transport of protons into the cell (symport system). The chain is Citrate-proton symporter (citA) from Salmonella typhi.